The primary structure comprises 74 residues: MISTSLLLVVLLFAILAIVDAQWGYGGPYGGYGGGYGGGPWGYGGGWRRRHWGGYGGGPWGGYGGGPWGGYYGK.

The N-terminal stretch at 1–21 (MISTSLLLVVLLFAILAIVDA) is a signal peptide. At Tyr-72 the chain carries Tyrosine amide.

This sequence belongs to the YARP (YGGW-amide related peptide) family. In terms of tissue distribution, expressed in hypoderm.

It localises to the secreted. Functionally, may have antifungic activity against D.coniospora. In Caenorhabditis elegans, this protein is Neuropeptide-like protein 33 (nlp-33).